The sequence spans 367 residues: THO complex subunit 6 (367 aa).

7 WD repeats span residues 23 to 67, 88 to 129, 157 to 196, 199 to 240, 243 to 283, 285 to 322, and 324 to 363; these read IETR…SQSA, AHEG…ESDV, SPMP…IKMT, GHSD…KVIG, DKKS…CVQT, PIPA…LSQI, and CAPC…CTFR.

The protein belongs to the WD repeat THOC6 family. Component of the THO complex, which is composed of THO1, THO2, THO3, THO5, THO6 and THO7. Interacts with ABI5, DDB1A and DWA2.

The protein resides in the nucleus. Its pathway is protein modification; protein ubiquitination. Its function is as follows. Acts as a component of the THO subcomplex of the TREX complex which is thought to couple mRNA transcription, processing and nuclear export. Functionally, component of the CUL4-RBX1-DDB1-DWA1/DWA2 E3 ubiquitin-protein ligase complex that acts as a negative regulator in abscisic acid (ABA) signaling. May function as the substrate recognition module within this complex leading to ABI5 degradation. Functionally redundant with DWA2. This chain is THO complex subunit 6 (THO6), found in Arabidopsis thaliana (Mouse-ear cress).